Here is a 162-residue protein sequence, read N- to C-terminus: 2-C-methyl-D-erythritol 2,4-cyclodiphosphate synthase (162 aa).

A divalent metal cation-binding residues include aspartate 12 and histidine 14. 4-CDP-2-C-methyl-D-erythritol 2-phosphate is bound by residues 12 to 14 and 38 to 39; these read DVH and HS. A divalent metal cation is bound at residue histidine 46. 4-CDP-2-C-methyl-D-erythritol 2-phosphate contacts are provided by residues 60-62, 65-69, phenylalanine 143, and arginine 146; these read DIG and FPDTD.

It belongs to the IspF family. Homotrimer. Requires a divalent metal cation as cofactor.

It catalyses the reaction 4-CDP-2-C-methyl-D-erythritol 2-phosphate = 2-C-methyl-D-erythritol 2,4-cyclic diphosphate + CMP. It participates in isoprenoid biosynthesis; isopentenyl diphosphate biosynthesis via DXP pathway; isopentenyl diphosphate from 1-deoxy-D-xylulose 5-phosphate: step 4/6. Its function is as follows. Involved in the biosynthesis of isopentenyl diphosphate (IPP) and dimethylallyl diphosphate (DMAPP), two major building blocks of isoprenoid compounds. Catalyzes the conversion of 4-diphosphocytidyl-2-C-methyl-D-erythritol 2-phosphate (CDP-ME2P) to 2-C-methyl-D-erythritol 2,4-cyclodiphosphate (ME-CPP) with a corresponding release of cytidine 5-monophosphate (CMP). The chain is 2-C-methyl-D-erythritol 2,4-cyclodiphosphate synthase from Azoarcus sp. (strain BH72).